Reading from the N-terminus, the 523-residue chain is MHCSLNGDWSMQLNSTEISDLIKQRIESFEVVSEARNEGTIVSVSDGIIRIHGLADVMQGEMIELPGGRYALALNLERDSVGAVVMGPYADLKEGMKVTGTGRILEVPVGPELLGRVVNTLGEPIDGKGPIEAKLTSPVEVIAPGVIDRKSVDQPVQTGYKSVDSMIPIGRGQRELVIGDRQTGKTAMAIDAIINQKNSGIFSIYVAIGQKASTIANVVRKLEEHGALANTIVVVASASESAALQYLAPYAGCAMGEYFRDRGEDALIVYDDLSKQAVAYRQISLLLKRPPGREAFPGDVFYLHSRLLERAARVNEEYVERFTNGEVKGKTGSLTALPIIETQAGDVSAFVPTNVISITDGQIFLQTELFNAGVRPAVDPGISVSRVGGSAQTKIIKKLSGGIRTALAAYRELAAFAQFSSDLDEATKKQLDHGQKVTELMKQKQYAPMSVFDQALVIFAAERGYLDDVELNKVLDFEAALLSYARGQYAELAAEIDKSGAYNDEIEAQLKKLTDDFKATQTW.

179–186 provides a ligand contact to ATP; it reads GDRQTGKT.

Belongs to the ATPase alpha/beta chains family. F-type ATPases have 2 components, CF(1) - the catalytic core - and CF(0) - the membrane proton channel. CF(1) has five subunits: alpha(3), beta(3), gamma(1), delta(1), epsilon(1). CF(0) has three main subunits: a(1), b(2) and c(9-12). The alpha and beta chains form an alternating ring which encloses part of the gamma chain. CF(1) is attached to CF(0) by a central stalk formed by the gamma and epsilon chains, while a peripheral stalk is formed by the delta and b chains.

Its subcellular location is the cell inner membrane. It carries out the reaction ATP + H2O + 4 H(+)(in) = ADP + phosphate + 5 H(+)(out). Its function is as follows. Produces ATP from ADP in the presence of a proton gradient across the membrane. The alpha chain is a regulatory subunit. The chain is ATP synthase subunit alpha from Vibrio parahaemolyticus serotype O3:K6 (strain RIMD 2210633).